The sequence spans 296 residues: MLYQQIASNKRKTVVLLIVFFCLLAAIGAAVGYLVLGSYQFGLVLALIIGVIYAVSMIFQSTNVVMSMNNAREVTEDEAPNYFHIVEDMAMVAQIPMPRVFIVEDDSLNAFATGSKPENAAVAATTGLLAVMNREELEGVIGHEVSHIRNYDIRISTIAVALASAVTLISSIGSRMLFYGGGRRRDDDREDGGNILVLIFSILSLILAPLAASLVQLAISRQREYLADASSVELTRNPQGMISALEKLDRSEPMGHPVDDASAALYINDPTKKEGLKSLFYTHPPIADRIERLRHM.

The next 2 membrane-spanning stretches (helical) occupy residues 14-34 (VVLL…VGYL) and 39-59 (YQFG…SMIF). Residue His-143 participates in Zn(2+) binding. The active site involves Glu-144. His-147 is a Zn(2+) binding site. 2 helical membrane-spanning segments follow: residues 158–178 (IAVA…RMLF) and 195–215 (ILVL…ASLV). Glu-224 serves as a coordination point for Zn(2+).

Belongs to the peptidase M48B family. Zn(2+) serves as cofactor.

Its subcellular location is the cell membrane. The polypeptide is Protease HtpX homolog (Streptococcus agalactiae serotype III (strain NEM316)).